The chain runs to 211 residues: Transcriptional regulator GfcR (211 aa).

The protein belongs to the purine/pyrimidine phosphoribosyltransferase family. GfcR subfamily.

DNA-binding transcriptional regulator that functions as a regulator of central sugar catabolic pathways. This is Transcriptional regulator GfcR from Halorubrum lacusprofundi (strain ATCC 49239 / DSM 5036 / JCM 8891 / ACAM 34).